We begin with the raw amino-acid sequence, 329 residues long: MQGSVTEFLKPRLVDIEQVSTTHAKVTLEPLERGFGHTLGNALRRILLSSMPGCAVTEVEIEGVLHEYSTKEGVQEDILEILLNLKGLAVKVEGKDEVIITLNKSGAGPVVAGDITHDGDVEIANPEHVICHLTDDNAEISMRIKVERGRGYVPSTARIHTEEDERPIGRLLVDATYSPVDKISYAVEAARVEQRTDLDKLVIDMETNGTLDPEEAIRRAATILAEQLDAFVDLRDVRVPEEKEEKPEFDPILLRPVDDLELTVRSANCLKAEAIHYIGDLVQRTEVELLKTPNLGKKSLTEIKDVLASRGLSLGMRLENWPPASIAED.

The tract at residues 1-235 (MQGSVTEFLK…EQLDAFVDLR (235 aa)) is alpha N-terminal domain (alpha-NTD). Residues 249 to 329 (FDPILLRPVD…NWPPASIAED (81 aa)) form an alpha C-terminal domain (alpha-CTD) region.

This sequence belongs to the RNA polymerase alpha chain family. In terms of assembly, homodimer. The RNAP catalytic core consists of 2 alpha, 1 beta, 1 beta' and 1 omega subunit. When a sigma factor is associated with the core the holoenzyme is formed, which can initiate transcription.

The catalysed reaction is RNA(n) + a ribonucleoside 5'-triphosphate = RNA(n+1) + diphosphate. Functionally, DNA-dependent RNA polymerase catalyzes the transcription of DNA into RNA using the four ribonucleoside triphosphates as substrates. The protein is DNA-directed RNA polymerase subunit alpha of Aliivibrio fischeri (strain ATCC 700601 / ES114) (Vibrio fischeri).